We begin with the raw amino-acid sequence, 197 residues long: Protein jagunal (197 aa).

At 1–39 (MATRGGPMVAGTDGNDFEFRQRVAGTYQISLLNKSRLKY) the chain is on the cytoplasmic side. A helical membrane pass occupies residues 40-60 (CIFFHALLFFVMLAKLTSDIL). The Lumenal segment spans residues 61 to 78 (DHLDIFVLEIEELEVPPP). The chain crosses the membrane as a helical span at residues 79–99 (LWWEYVWAASLLTSFLGLSAA). The Cytoplasmic portion of the chain corresponds to 100–109 (RGNKVREMQK). The chain crosses the membrane as a helical span at residues 110–130 (YMVAILLFAILPLFYCFAYYF). The Lumenal segment spans residues 131 to 159 (SDVWEFATLDKSVELDETDIFVWRGYPYG). A helical transmembrane segment spans residues 160-180 (VFWYAFCFVGFQVHGFTLYFA). At 181–197 (YNLVKAWKARTATRKFQ) the chain is on the cytoplasmic side.

The protein belongs to the jagunal family.

The protein resides in the endoplasmic reticulum membrane. Required for endoplasmic reticulum organization and proper vesicular traffic during vitellogenesis. Required for oocyte and bristle growth. The chain is Protein jagunal from Drosophila melanogaster (Fruit fly).